Here is a 288-residue protein sequence, read N- to C-terminus: Phenazine biosynthesis-like domain-containing protein (288 aa).

Residue glutamate 46 is part of the active site.

It belongs to the PhzF family. In terms of assembly, interacts with UNRIP/MAWD.

The protein is Phenazine biosynthesis-like domain-containing protein (Pbld) of Rattus norvegicus (Rat).